Consider the following 138-residue polypeptide: MNIIDHFEQENISKRTANTKIPEFEAGDTVKVTVKIIDRSIEKDGKEKLTERFQAYEGVVIAKRNRGITSSFLVRKISHGEGVERRFMTYSPIVHSIDVVKYGVVRRAKLYYLRNRSGKSARIKERHIPIAKTKAAKA.

Belongs to the bacterial ribosomal protein bL19 family.

In terms of biological role, this protein is located at the 30S-50S ribosomal subunit interface and may play a role in the structure and function of the aminoacyl-tRNA binding site. This is Large ribosomal subunit protein bL19 from Rickettsia massiliae (strain Mtu5).